Consider the following 175-residue polypeptide: NADH-ubiquinone oxidoreductase chain 6 (175 aa).

A run of 5 helical transmembrane segments spans residues 1-21, 25-45, 48-68, 88-108, and 149-169; these read MMTYIAFILSTILVVSFVGFS, SPIYGGLGLIVSGGVGCGIVL, GGSFLGLMVFLIYLGGMLVVF, TVLSLFVLGFMAELLFAGYCI, and YGTWLVIVTGWSLVIGVLVVM.

Belongs to the complex I subunit 6 family. As to quaternary structure, core subunit of respiratory chain NADH dehydrogenase (Complex I) which is composed of 45 different subunits.

The protein resides in the mitochondrion inner membrane. The catalysed reaction is a ubiquinone + NADH + 5 H(+)(in) = a ubiquinol + NAD(+) + 4 H(+)(out). Core subunit of the mitochondrial membrane respiratory chain NADH dehydrogenase (Complex I) which catalyzes electron transfer from NADH through the respiratory chain, using ubiquinone as an electron acceptor. Essential for the catalytic activity and assembly of complex I. In Urotrichus talpoides (Japanese shrew mole), this protein is NADH-ubiquinone oxidoreductase chain 6 (MT-ND6).